Reading from the N-terminus, the 741-residue chain is Translation initiation factor IF-2 (741 aa).

2 stretches are compositionally biased toward basic and acidic residues: residues His48 to Lys74 and Lys107 to Ala123. The tract at residues His48–Leu158 is disordered. Residues Ala127–Lys139 are compositionally biased toward basic residues. The segment covering Gln140–Pro151 has biased composition (low complexity). In terms of domain architecture, tr-type G spans Glu242–Lys411. The interval Gly251–Thr258 is G1. Position 251–258 (Gly251–Thr258) interacts with GTP. A G2 region spans residues Gly276–His280. The G3 stretch occupies residues Asp297–Gly300. Residues Asp297–His301 and Asn351–Asp354 each bind GTP. Residues Asn351–Asp354 form a G4 region. Positions Ser387–Lys389 are G5.

The protein belongs to the TRAFAC class translation factor GTPase superfamily. Classic translation factor GTPase family. IF-2 subfamily.

The protein localises to the cytoplasm. In terms of biological role, one of the essential components for the initiation of protein synthesis. Protects formylmethionyl-tRNA from spontaneous hydrolysis and promotes its binding to the 30S ribosomal subunits. Also involved in the hydrolysis of GTP during the formation of the 70S ribosomal complex. The protein is Translation initiation factor IF-2 (infB) of Geobacillus stearothermophilus (Bacillus stearothermophilus).